A 229-amino-acid chain; its full sequence is Cytochrome b translational activator protein CBS1, mitochondrial (229 aa).

A mitochondrion-targeting transit peptide spans 1–25 (MLRTKVFATTVARISGIRRYIPIRT).

It is found in the mitochondrion inner membrane. Its function is as follows. mRNA-specific translational activator of cytochrome b. The cytochrome b (COB) leader RNA may represent the target sequence for CBS1 and CBS2, tethering the COB mRNA to the inner mitochondrial membrane, where cotranslational insertion of cytochrome b into the membrane can occur. The sequence is that of Cytochrome b translational activator protein CBS1, mitochondrial (CBS1) from Saccharomyces cerevisiae (strain ATCC 204508 / S288c) (Baker's yeast).